The chain runs to 1435 residues: MEIFSQKDYYPTPSSNVISYESDCVSKPVNSADLPALIVHLSSPLEGVDYNASADFFLIYRNFITPQDLHDLLIYRFRWCIREITTNAAKAKRRRIGEVALVRTFVLLRHSILNYFVQDFLPNITLRLRLIEFLNDKHIEQYPKIISSCIINLKKNWVHCSKLVWENIELNEPDKLDFDAWLHYSLKDFTQLESLHKRGSRLSIYARQSFASPDFRNQSVLSLYKTSDVFRLPEKLQSSNSSKNQRSPSMLLFPDNTSNVYSKHRIAKEPSVDNESEDMSDSKQKISHLSKVTLVSTLMKGVDYPSSYAVDKIMPPTPAKKVEFILNSLYIPEDLNEQSGTLQGTSTTSSLDNNSNSNSRSNTSSMSVLHRSAIGLLAKWMKNHNRHDSSNDKKFMSAIKPANQKPEMDAFVKYVVSISSLNRKSSKEEEEEFLNSDSSKFDILSARTIDEVESLLHLQNQLIEKVQTHSNNNRGPTVNVDCERREHIHDIKILQQNSFKPSNDNFSAMDNLDLYQTVSSIAQSVISLTNTLNKQLQNNESNMQPSPSYDALQRRKVKSLTTAYYNKMHGSYSAESMRLFDKDNSSSRTDENGPQRLLFHETDKTNSEAITNMTPRRKNHSQSQKSMTSSPLKNVLPDLKESSPLNDSREDTESITYSYDSELSSSSPPRDTVTKKSRKVRNIVNNTDSPTLKTKTGFLNLREFTFEDTKSLDEKKSTIDGLEKNYDNKENQESEYESTKKLDNSLDASSEANNYDITTRKKHSSCNHKIKQAVVRPASGRISISRVQSIAITPTKELSIVDPEQNKSNSVIEEISEIEPLNLEYNKKSALYSDTSSTVISISTSKLFESAQNSPLKQTQNPQREFPNGTSVSETNRIRLSIAPTIESVVSDLNSITTGSTVETFETSRDLPVPHQRIINLREEYQRGNQDIISNTSSLHELKTIDLSDSNNDLESPSTHAKNNKYFFSPDDGSIDVASPMKNVEELKSKFLKNESETNSNISGSVLTMDDIDINDTSSARNTRRANSESAFTGSLNKKNLNEIANMLDDSINDDPITVALMKLEGTYEKIPEKPENTKSSDAIGIKTSKLADEVEMLNLNNLPSFQNSPAEKRKSLLIERRRQTIMNIPFTPDQSEKEGFTSSSPEKIDVSANVDVAVQAAQIQELIGQYRIHDSRLMISNNESHVPFILMYDSLSVAQQMTLIEKEILGEIDWKDLLDLKMKHEGPQVISWLQLLVRNETLSGIDLAISRFNLTVDWIISEILLTKSSKMKRNVIQRFIHVADHCRTFQNFNTLMEIILALSSSVVQKFTDAWRLIEPGDLLTWEELKKIPSLDRNYSTIRNLLNSVNPLVGCVPFIVVYLSDLSANAEKKDWILEDKVVNYNKFDTNVQIVKNFIQRVQWSKFYTFKVNHELLSKCVYISTLTQEEINELST.

The region spanning 25–157 is the N-terminal Ras-GEF domain; sequence VSKPVNSADL…SCIINLKKNW (133 aa). Positions 235 to 256 are disordered; the sequence is KLQSSNSSKNQRSPSMLLFPDN. The segment covering 237-249 has biased composition (low complexity); sequence QSSNSSKNQRSPS. Position 271 is a phosphoserine (Ser271). Residues 338 to 365 are disordered; that stretch reads QSGTLQGTSTTSSLDNNSNSNSRSNTSS. A Phosphoserine modification is found at Ser559. Residues 582–606 are compositionally biased toward basic and acidic residues; it reads KDNSSSRTDENGPQRLLFHETDKTN. The interval 582–689 is disordered; the sequence is KDNSSSRTDE…VRNIVNNTDS (108 aa). Polar residues predominate over residues 621 to 632; the sequence is SQSQKSMTSSPL. A compositionally biased stretch (low complexity) spans 654–667; that stretch reads SITYSYDSELSSSS. Ser689 bears the Phosphoserine mark. A Phosphothreonine modification is found at Thr691. Basic and acidic residues predominate over residues 723 to 744; that stretch reads EKNYDNKENQESEYESTKKLDN. Positions 723–747 are disordered; it reads EKNYDNKENQESEYESTKKLDNSLD. Residues Ser808 and Ser810 each carry the phosphoserine modification. A disordered region spans residues 851–871; it reads AQNSPLKQTQNPQREFPNGTS. Ser1028 and Ser1109 each carry phosphoserine. Residues 1194 to 1434 form the Ras-GEF domain; the sequence is DSLSVAQQMT…LTQEEINELS (241 aa).

It belongs to the LTE1 family. As to quaternary structure, interacts with CDC24, CDC42, KEL1, KEL2, RAS2 and TEM1. Phosphorylated by CDC28 in a cell cycle-dependent manner and in response to nocodazole. Dephosphorylion by CDC14 triggers LTE1 release from bud cortex during the exit of mitosis.

The protein localises to the cytoplasm. It is found in the bud. Its function is as follows. GDP-GTP exchange factor for TEM1, a Ras-like protein, component of the mitotic exit network (MEN). Activation of TEM1 by LTE1 in the bud ultimately leads to activation of CDC15 followed by the release of CDC14 from the nucleolus, which then inactivates cyclin-dependent kinases (CDKs) activity by several mechanism. Required for TEM1 localization to the bud cortex during mitotic exit. Fine-tunes the timing of the mitotic exit and couples this event with cytokinesis. Functionally, involved in proprotein-processing like proalpha factor-processing in the secretory pathway. In Saccharomyces cerevisiae (strain ATCC 204508 / S288c) (Baker's yeast), this protein is Guanine nucleotide exchange factor LTE1 (LTE1).